The following is a 363-amino-acid chain: 4-hydroxy-2-oxovalerate aldolase 1 (363 aa).

A Pyruvate carboxyltransferase domain is found at 13–265 (VRMTDTSLRD…KTGIDFFDIA (253 aa)). Residue 21-22 (RD) participates in substrate binding. D22 contacts Mn(2+). H25 functions as the Proton acceptor in the catalytic mechanism. 2 residues coordinate substrate: S175 and H204. The Mn(2+) site is built by H204 and H206. Y295 provides a ligand contact to substrate.

Belongs to the 4-hydroxy-2-oxovalerate aldolase family.

The enzyme catalyses (S)-4-hydroxy-2-oxopentanoate = acetaldehyde + pyruvate. The protein is 4-hydroxy-2-oxovalerate aldolase 1 of Mycobacterium sp. (strain JLS).